A 401-amino-acid chain; its full sequence is Chorismate synthase (401 aa).

2 residues coordinate NADP(+): R40 and R46. Residues 135–137 (RAS), 256–257 (QA), G300, 315–319 (KPIST), and R341 contribute to the FMN site.

Belongs to the chorismate synthase family. Homotetramer. The cofactor is FMNH2.

It catalyses the reaction 5-O-(1-carboxyvinyl)-3-phosphoshikimate = chorismate + phosphate. The protein operates within metabolic intermediate biosynthesis; chorismate biosynthesis; chorismate from D-erythrose 4-phosphate and phosphoenolpyruvate: step 7/7. Catalyzes the anti-1,4-elimination of the C-3 phosphate and the C-6 proR hydrogen from 5-enolpyruvylshikimate-3-phosphate (EPSP) to yield chorismate, which is the branch point compound that serves as the starting substrate for the three terminal pathways of aromatic amino acid biosynthesis. This reaction introduces a second double bond into the aromatic ring system. This is Chorismate synthase from Mycobacterium avium (strain 104).